A 235-amino-acid polypeptide reads, in one-letter code: Small ribosomal subunit protein uS3 (235 aa).

In terms of domain architecture, KH type-2 spans 39–107 (VRKFLNKELA…PAQINIAEVK (69 aa)). Residues 215–235 (AQSEQQPADKPKKAPRGKGRK) form a disordered region.

This sequence belongs to the universal ribosomal protein uS3 family. As to quaternary structure, part of the 30S ribosomal subunit. Forms a tight complex with proteins S10 and S14.

Its function is as follows. Binds the lower part of the 30S subunit head. Binds mRNA in the 70S ribosome, positioning it for translation. The polypeptide is Small ribosomal subunit protein uS3 (Haemophilus influenzae (strain PittEE)).